The chain runs to 178 residues: Bifunctional protein PyrR (178 aa).

The short motif at 99 to 111 (IIIIDDVLYTCRT) is the PRPP-binding element.

The protein belongs to the purine/pyrimidine phosphoribosyltransferase family. PyrR subfamily. In terms of assembly, homodimer and homohexamer; in equilibrium.

The catalysed reaction is UMP + diphosphate = 5-phospho-alpha-D-ribose 1-diphosphate + uracil. Its function is as follows. Regulates transcriptional attenuation of the pyrimidine nucleotide (pyr) operon by binding in a uridine-dependent manner to specific sites on pyr mRNA. This disrupts an antiterminator hairpin in the RNA and favors formation of a downstream transcription terminator, leading to a reduced expression of downstream genes. In terms of biological role, also displays a weak uracil phosphoribosyltransferase activity which is not physiologically significant. The protein is Bifunctional protein PyrR of Clostridium beijerinckii (strain ATCC 51743 / NCIMB 8052) (Clostridium acetobutylicum).